Consider the following 193-residue polypeptide: Protein hunchback (193 aa).

The segment covering 18–31 has biased composition (basic residues); it reads HLHHHHAHHSHHRH. Disordered stretches follow at residues 18–57 and 153–193; these read HLHH…SNTN and LTPP…KYMA. A compositionally biased stretch (low complexity) spans 34-44; it reads NSNSNASSPHQ. Over residues 174 to 193 the composition is skewed to basic and acidic residues; the sequence is EPEKEHDLMSNSSEDMKYMA.

This sequence belongs to the hunchback C2H2-type zinc-finger protein family.

Its subcellular location is the nucleus. In terms of biological role, gap class segmentation protein that controls development of head structures. In Drosophila petalopeza (Fruit fly), this protein is Protein hunchback (hb).